The sequence spans 657 residues: tRNA 5-methylaminomethyl-2-thiouridine biosynthesis bifunctional protein MnmC (657 aa).

Positions 1-235 are tRNA (mnm(5)s(2)U34)-methyltransferase; the sequence is MSDAHNAQLD…KREMLAGPFQ (235 aa). The interval 261-657 is FAD-dependent cmnm(5)s(2)U34 oxidoreductase; that stretch reads IGAGLAGCAT…QLIRGTGSPT (397 aa).

This sequence in the N-terminal section; belongs to the methyltransferase superfamily. tRNA (mnm(5)s(2)U34)-methyltransferase family. It in the C-terminal section; belongs to the DAO family. Requires FAD as cofactor.

It localises to the cytoplasm. It carries out the reaction 5-aminomethyl-2-thiouridine(34) in tRNA + S-adenosyl-L-methionine = 5-methylaminomethyl-2-thiouridine(34) in tRNA + S-adenosyl-L-homocysteine + H(+). Its function is as follows. Catalyzes the last two steps in the biosynthesis of 5-methylaminomethyl-2-thiouridine (mnm(5)s(2)U) at the wobble position (U34) in tRNA. Catalyzes the FAD-dependent demodification of cmnm(5)s(2)U34 to nm(5)s(2)U34, followed by the transfer of a methyl group from S-adenosyl-L-methionine to nm(5)s(2)U34, to form mnm(5)s(2)U34. This Ectopseudomonas mendocina (strain ymp) (Pseudomonas mendocina) protein is tRNA 5-methylaminomethyl-2-thiouridine biosynthesis bifunctional protein MnmC.